A 30-amino-acid chain; its full sequence is Cycloviolacin-O7 (30 aa).

A cross-link (cyclopeptide (Ser-Asn)) is located at residues 1-30 (SIPCGESCVWIPCTITALAGCKCKSKVCYN). 3 disulfides stabilise this stretch: C4–C21, C8–C23, and C13–C28.

Post-translationally, this is a cyclic peptide.

Probably participates in a plant defense mechanism. This is Cycloviolacin-O7 from Viola odorata (Sweet violet).